Consider the following 94-residue polypeptide: Large ribosomal subunit protein uL23 (94 aa).

This sequence belongs to the universal ribosomal protein uL23 family. Part of the 50S ribosomal subunit. Contacts protein L29, and trigger factor when it is bound to the ribosome.

One of the early assembly proteins it binds 23S rRNA. One of the proteins that surrounds the polypeptide exit tunnel on the outside of the ribosome. Forms the main docking site for trigger factor binding to the ribosome. The chain is Large ribosomal subunit protein uL23 from Exiguobacterium sibiricum (strain DSM 17290 / CCUG 55495 / CIP 109462 / JCM 13490 / 255-15).